A 340-amino-acid chain; its full sequence is DnaJ homolog subfamily B member 1 (340 aa).

A J domain is found at 2–70 (GKDYYQTLGL…REIFDRYGEE (69 aa)). The segment at 68–90 (GEEGLKGSGPSGGSSGGTNGTSF) is disordered. Gly residues predominate over residues 73 to 86 (KGSGPSGGSSGGTN). Phosphothreonine is present on Thr307.

In terms of assembly, interacts with DNAJC3. Interacts with HSF1 (via transactivation domain); this interaction results in the inhibition of heat shock- and HSF1-induced transcriptional activity during the attenuation and recovery phase period of the heat shock response. Interacts with BAG3.

It is found in the cytoplasm. Its subcellular location is the nucleus. The protein resides in the nucleolus. In terms of biological role, interacts with HSP70 and can stimulate its ATPase activity. Stimulates the association between HSC70 and HIP. Negatively regulates heat shock-induced HSF1 transcriptional activity during the attenuation and recovery phase period of the heat shock response. Stimulates ATP hydrolysis and the folding of unfolded proteins mediated by HSPA1A/B (in vitro). This is DnaJ homolog subfamily B member 1 (DNAJB1) from Bos taurus (Bovine).